The chain runs to 127 residues: Large-conductance mechanosensitive channel (127 aa).

3 helical membrane passes run glutamate 9 to phenylalanine 29, isoleucine 32 to isoleucine 52, and valine 75 to leucine 95.

Belongs to the MscL family. As to quaternary structure, homopentamer.

It is found in the cell inner membrane. Functionally, channel that opens in response to stretch forces in the membrane lipid bilayer. May participate in the regulation of osmotic pressure changes within the cell. This Legionella pneumophila (strain Paris) protein is Large-conductance mechanosensitive channel.